The chain runs to 199 residues: NADH-quinone oxidoreductase subunit C (199 aa).

It belongs to the complex I 30 kDa subunit family. In terms of assembly, NDH-1 is composed of 14 different subunits. Subunits NuoB, C, D, E, F, and G constitute the peripheral sector of the complex.

The protein localises to the cell inner membrane. The catalysed reaction is a quinone + NADH + 5 H(+)(in) = a quinol + NAD(+) + 4 H(+)(out). NDH-1 shuttles electrons from NADH, via FMN and iron-sulfur (Fe-S) centers, to quinones in the respiratory chain. The immediate electron acceptor for the enzyme in this species is believed to be ubiquinone. Couples the redox reaction to proton translocation (for every two electrons transferred, four hydrogen ions are translocated across the cytoplasmic membrane), and thus conserves the redox energy in a proton gradient. The sequence is that of NADH-quinone oxidoreductase subunit C from Rhodopseudomonas palustris (strain BisB18).